The following is a 485-amino-acid chain: MEKQVRVRYAPSPTGHLHIGNARTALFNYLFARHQDGKFIIRIEDTDVKRNVAGGEESQLKYLKWLGMDWDEGVDVGGEFGPYRQTERLDIYKKLYEDLLERGLAYKCYMTEEELEAEREGQIARGETPRYAGNHRDLTEAQVKEFEAEGRIPSIRFRVPADRDYTFKDIVKDEVAFHSNDFGDFVIVKKDGIPTYNFAVAVDDHLMEITHVLRGDDHISNTPKQMMIYEAFGWDIPQFGHMTLIVNESRKKLSKRDESIIQFIEQYKELGYLPEAIFNFIALLGWSPVGEEEIFSQEEFIKMFDAARLSKSPALFDSQKLKWMNNQYMKKQDLDTVVELSLPHLVKAGRIGETLSEQEQAWIRDVIALYHEQMSFGAEIVELSEMFFKDHVDYEEEGQEVLKGEQVPEVLRAFAGQVEALEAMEPAAIKAAIKAVQKETGHKGKNLFMPIRVATTGQTHGPELPNAIALLGKEKVLNRLQKVIG.

Positions Pro11–Asn21 match the 'HIGH' region motif. A 'KMSKS' region motif is present at residues Lys252–Arg256. Residue Lys255 participates in ATP binding.

This sequence belongs to the class-I aminoacyl-tRNA synthetase family. Glutamate--tRNA ligase type 1 subfamily. In terms of assembly, monomer.

It is found in the cytoplasm. The catalysed reaction is tRNA(Glu) + L-glutamate + ATP = L-glutamyl-tRNA(Glu) + AMP + diphosphate. Functionally, catalyzes the attachment of glutamate to tRNA(Glu) in a two-step reaction: glutamate is first activated by ATP to form Glu-AMP and then transferred to the acceptor end of tRNA(Glu). This Bacillus thuringiensis (strain Al Hakam) protein is Glutamate--tRNA ligase.